A 513-amino-acid chain; its full sequence is ATP synthase subunit alpha, mitochondrial (513 aa).

170 to 177 contributes to the ATP binding site; that stretch reads GDRQTGKT.

It belongs to the ATPase alpha/beta chains family. F-type ATPases have 2 components, CF(1) - the catalytic core - and CF(0) - the membrane proton channel. CF(1) has five subunits: alpha(3), beta(3), gamma(1), delta(1), epsilon(1). CF(0) has three main subunits: a, b and c.

It is found in the mitochondrion. It localises to the mitochondrion inner membrane. Its function is as follows. Mitochondrial membrane ATP synthase (F(1)F(0) ATP synthase or Complex V) produces ATP from ADP in the presence of a proton gradient across the membrane which is generated by electron transport complexes of the respiratory chain. F-type ATPases consist of two structural domains, F(1) - containing the extramembraneous catalytic core, and F(0) - containing the membrane proton channel, linked together by a central stalk and a peripheral stalk. During catalysis, ATP synthesis in the catalytic domain of F(1) is coupled via a rotary mechanism of the central stalk subunits to proton translocation. Subunits alpha and beta form the catalytic core in F(1). Rotation of the central stalk against the surrounding alpha(3)beta(3) subunits leads to hydrolysis of ATP in three separate catalytic sites on the beta subunits. Subunit alpha does not bear the catalytic high-affinity ATP-binding sites. This is ATP synthase subunit alpha, mitochondrial (ATPA) from Marchantia polymorpha (Common liverwort).